A 336-amino-acid polypeptide reads, in one-letter code: Flavonoid 4'-O-methyltransferase 3 (336 aa).

S-adenosyl-L-methionine-binding residues include tyrosine 140 and aspartate 203. The active-site Proton acceptor is histidine 241.

The protein belongs to the class I-like SAM-binding methyltransferase superfamily. Cation-independent O-methyltransferase family. Homodimer. Expressed in leaves.

It catalyses the reaction scutellarein 7-methyl ether + S-adenosyl-L-methionine = ladanein + S-adenosyl-L-homocysteine + H(+). The enzyme catalyses cirsimaritin + S-adenosyl-L-methionine = salvigenin + S-adenosyl-L-homocysteine + H(+). It carries out the reaction cirsiliol + S-adenosyl-L-methionine = eupatorin + S-adenosyl-L-homocysteine + H(+). The catalysed reaction is genkwanin + S-adenosyl-L-methionine = apigenin 4',7-dimethyl ether + S-adenosyl-L-homocysteine. The protein operates within flavonoid metabolism. With respect to regulation, substrate inhibition by genkwanin (GENK) at concentrations above 2.5 mM. Its function is as follows. Flavonoid 4'-O-methyltransferase involved in the biosynthesis of polymethoxylated flavonoids natural products such as nevadensin and salvigenin, aroma compounds which contribute to the flavor of sweet basil, and exhibit pharmacological activities such as anti-allergic, anti-oxidant, antibacterial, anti-proliferative, and anti-inflammatory effects. Catalyzes S-adenosylmethionine-dependent regioselective 4'-O-methylation of flavonoids; active on various hydroxylated flavonoid substrates, including scutellarein-7-methyl ether (SCU7Me) and cirsimaritin (CIRM), and, with a lower efficiency, hispidulin, ladanein (LAD), cirsioliol (CIRL) and genkwanin (GENK). This is Flavonoid 4'-O-methyltransferase 3 from Ocimum basilicum (Sweet basil).